The sequence spans 119 residues: Large ribosomal subunit protein bL20c (119 aa).

Belongs to the bacterial ribosomal protein bL20 family.

Its subcellular location is the plastid. It is found in the chloroplast. Functionally, binds directly to 23S ribosomal RNA and is necessary for the in vitro assembly process of the 50S ribosomal subunit. It is not involved in the protein synthesizing functions of that subunit. In Zea mays (Maize), this protein is Large ribosomal subunit protein bL20c (rpl20).